Here is a 221-residue protein sequence, read N- to C-terminus: MNKLIQLALFFTLMLTGCSNSSTSSESKVETTVKTTAAFPQKELEKELKKLKPVSLDMKFESPLATELGKRKAKEEAEKQRQIAAEKKLEKEREAKRKKQQEEKAERQRLAEQQAAERQRLAEAERQAELERQRQAAIQKEQKANAEKKRQSQAQRQQTEAPSSNSQDPPSSSSQTDKTIQQPASELPDDDGYGYEERKKWHDDQVEWGIKQGYIDPEDAP.

The first 23 residues, 1–23 (MNKLIQLALFFTLMLTGCSNSST), serve as a signal peptide directing secretion. Residues 67–221 (ELGKRKAKEE…QGYIDPEDAP (155 aa)) form a disordered region. Residues 68 to 150 (LGKRKAKEEA…EQKANAEKKR (83 aa)) are compositionally biased toward basic and acidic residues. A coiled-coil region spans residues 70-161 (KRKAKEEAEK…SQAQRQQTEA (92 aa)). Positions 152–161 (SQAQRQQTEA) are enriched in polar residues. The span at 162-174 (PSSNSQDPPSSSS) shows a compositional bias: low complexity. Positions 175–184 (QTDKTIQQPA) are enriched in polar residues. Positions 195-205 (YEERKKWHDDQ) are enriched in basic and acidic residues.

This is an uncharacterized protein from Bacillus subtilis (strain 168).